A 187-amino-acid polypeptide reads, in one-letter code: Ubiquinol-cytochrome c reductase iron-sulfur subunit (187 aa).

The chain crosses the membrane as a helical span at residues leucine 15–isoleucine 35. One can recognise a Rieske domain in the interval glutamine 89–glutamine 185. Residues cysteine 129, histidine 131, cysteine 149, and histidine 152 each contribute to the [2Fe-2S] cluster site. Cysteine 134 and cysteine 151 are oxidised to a cystine.

Belongs to the Rieske iron-sulfur protein family. As to quaternary structure, the main subunits of complex b-c1 are: cytochrome b, cytochrome c1 and the Rieske protein. [2Fe-2S] cluster serves as cofactor.

The protein resides in the cell membrane. It carries out the reaction a quinol + 2 Fe(III)-[cytochrome c](out) = a quinone + 2 Fe(II)-[cytochrome c](out) + 2 H(+)(out). Its function is as follows. Component of the ubiquinol-cytochrome c reductase complex (complex III or cytochrome b-c1 complex), which is a respiratory chain that generates an electrochemical potential coupled to ATP synthesis. The protein is Ubiquinol-cytochrome c reductase iron-sulfur subunit (petA) of Cereibacter sphaeroides (Rhodobacter sphaeroides).